The chain runs to 209 residues: Ribosomal RNA large subunit methyltransferase E (209 aa).

The S-adenosyl-L-methionine site is built by glycine 63, tryptophan 65, aspartate 83, aspartate 99, and aspartate 124. Lysine 164 acts as the Proton acceptor in catalysis.

The protein belongs to the class I-like SAM-binding methyltransferase superfamily. RNA methyltransferase RlmE family.

It localises to the cytoplasm. It carries out the reaction uridine(2552) in 23S rRNA + S-adenosyl-L-methionine = 2'-O-methyluridine(2552) in 23S rRNA + S-adenosyl-L-homocysteine + H(+). In terms of biological role, specifically methylates the uridine in position 2552 of 23S rRNA at the 2'-O position of the ribose in the fully assembled 50S ribosomal subunit. The sequence is that of Ribosomal RNA large subunit methyltransferase E from Proteus mirabilis (strain HI4320).